Consider the following 135-residue polypeptide: Small ribosomal subunit protein uS12c (135 aa).

It belongs to the universal ribosomal protein uS12 family. As to quaternary structure, part of the 30S ribosomal subunit.

It localises to the plastid. The protein localises to the chloroplast. Functionally, with S4 and S5 plays an important role in translational accuracy. Located at the interface of the 30S and 50S subunits. This Adiantum capillus-veneris (Maidenhair fern) protein is Small ribosomal subunit protein uS12c (rps12).